We begin with the raw amino-acid sequence, 89 residues long: Putative regulatory protein Dalk_1931 (89 aa).

It belongs to the RemA family.

This is Putative regulatory protein Dalk_1931 from Desulfatibacillum aliphaticivorans.